A 202-amino-acid polypeptide reads, in one-letter code: STHGKIRIHDYVANGYVILFSHPGDFTPVCTTELAAMANYAKEFEKRGVKLLGISCDDVQSHKEWTKDIEAYKPGSKVTYPIMADPDRSAIKQLNMVDPDEKDAEGQLPSRTLHIVGPDKKVKLSFLYPSCTGRNMDEVVRAVDSLLTAAKHKVATPANWKPGECVVIAPGVSDEEAKKLFPQGFETKDLPSKKGYLRFTKV.

The Thioredoxin domain maps to 1–148; sequence STHGKIRIHD…VVRAVDSLLT (148 aa). C30 acts as the Cysteine sulfenic acid (-SOH) intermediate in catalysis. The Bipartite nuclear localization signal signature appears at 178-201; sequence KKLFPQGFETKDLPSKKGYLRFTK.

Belongs to the peroxiredoxin family. Prx6 subfamily. Embryos.

The protein resides in the nucleus. Its subcellular location is the cytoplasm. The catalysed reaction is a hydroperoxide + [thioredoxin]-dithiol = an alcohol + [thioredoxin]-disulfide + H2O. Its function is as follows. Thiol-specific peroxidase that catalyzes the reduction of hydrogen peroxide and organic hydroperoxides to water and alcohols, respectively. Seems to contribute to the inhibition of germination during stress. The protein is Probable 1-Cys peroxiredoxin of Bromus secalinus (Rye brome).